Reading from the N-terminus, the 875-residue chain is MTDSITDLQSDQRPDRSYDFASAERRWQLAWTERACFTVPDVPDPGARTYYVLEMFPYPSGQIHMGHVRNYTLGDVVARYKRAQGYQVLHPMGWDAFGLPAENAARERGVHPGQWTWNNIAAMRGELQRMGLSITWEREFATCDPSYYGHQQALFLDFLKKNLVERRESWVNWDPVDETVLANEQVIDGKGWRSGAPVERKKLSQWFLRITDYAEELLAGLDQLDRWPERVRVMQSRWIGRSEGARLRFPLVEPLGDQREIEVYTTRPDTLYGMSFVAIAADHPVAAALAAHHPALAAFVAECRSLGTSEAAIEAAEKRGFDTGLRVKHPFCDETFPVWIANFVLMDYGTGAVFGCPAHDQRDLDFARKYDLSVTPVVLPSDQDAASFTIGRKAYDGDGILFNSGPFDGLTPDAARREAITRLEAMGWGQGVTNWRLRDWGVSRQRYWGCPIPIIHCDQCGPVPVPADQLPVTLPEDVTFDRPGNPLDHHPSWKHVTCPSCGAAAVRETDTFDTFVDSSWYFARFASPHAHVPVLKEAAQNWLPVDQYIGGIEHAILHLLYARFFTRAMADTGHVPVREPFAGLFTQGMVTHESYRAADGRWLSPVEVTRHGETVVETATGEPVQVGRGEKMSKSKRNTVAPGEIFNRYGADAARWFILSDNPPERDMEWTDAGAVGAYRFVQRLYRLAEAVARIAKEETNRDDASSDAAMTLRRMTHRTVAAVTEALEGFNFNVAVARVYEFANALTEAEKKAAEPGMTAARVEAITLLSRIIAPMMPHLAEEMATLIEQGPKLVAEQVWPSADPALLVVQSVTIAIQVMGKLRATLDISPDADQDSVIAQAEADPNVVRALEGKRVVKRIYVPNRIVNFVIAG.

The 'HIGH' region motif lies at 57–67; that stretch reads PYPSGQIHMGH. Positions 631–635 match the 'KMSKS' region motif; sequence KMSKS. An ATP-binding site is contributed by lysine 634.

It belongs to the class-I aminoacyl-tRNA synthetase family.

The protein localises to the cytoplasm. It carries out the reaction tRNA(Leu) + L-leucine + ATP = L-leucyl-tRNA(Leu) + AMP + diphosphate. The chain is Leucine--tRNA ligase from Granulibacter bethesdensis (strain ATCC BAA-1260 / CGDNIH1).